We begin with the raw amino-acid sequence, 374 residues long: Type IV secretion system protein PtlG homolog (374 aa).

Residues 38–56 (WMFALVAVALSCLLATGIW) form a helical membrane-spanning segment. Residues 87 to 116 (PREPEPAPLPDMPAAPNPILPQPRPAPPVP) are disordered. Residues 92–116 (PAPLPDMPAAPNPILPQPRPAPPVP) show a composition bias toward pro residues.

This sequence belongs to the TrbI/VirB10 family.

Its subcellular location is the cell membrane. The protein is Type IV secretion system protein PtlG homolog (ptlG) of Bordetella parapertussis (strain 12822 / ATCC BAA-587 / NCTC 13253).